The sequence spans 336 residues: Ketol-acid reductoisomerase (NADP(+)) 1 (336 aa).

Residues 2-181 (AKVYYEKDVT…GATRAGVLET (180 aa)) form the KARI N-terminal Rossmann domain. NADP(+)-binding positions include 25-28 (YGSQ), arginine 48, serine 52, and 82-85 (DELQ). The active site involves histidine 107. Glycine 133 is an NADP(+) binding site. The 146-residue stretch at 182–327 (TFKEETETDL…RKLREMMPFV (146 aa)) folds into the KARI C-terminal knotted domain. Mg(2+)-binding residues include aspartate 190, glutamate 194, glutamate 226, and glutamate 230. Serine 251 provides a ligand contact to substrate.

This sequence belongs to the ketol-acid reductoisomerase family. It depends on Mg(2+) as a cofactor.

The enzyme catalyses (2R)-2,3-dihydroxy-3-methylbutanoate + NADP(+) = (2S)-2-acetolactate + NADPH + H(+). It catalyses the reaction (2R,3R)-2,3-dihydroxy-3-methylpentanoate + NADP(+) = (S)-2-ethyl-2-hydroxy-3-oxobutanoate + NADPH + H(+). The protein operates within amino-acid biosynthesis; L-isoleucine biosynthesis; L-isoleucine from 2-oxobutanoate: step 2/4. It participates in amino-acid biosynthesis; L-valine biosynthesis; L-valine from pyruvate: step 2/4. In terms of biological role, involved in the biosynthesis of branched-chain amino acids (BCAA). Catalyzes an alkyl-migration followed by a ketol-acid reduction of (S)-2-acetolactate (S2AL) to yield (R)-2,3-dihydroxy-isovalerate. In the isomerase reaction, S2AL is rearranged via a Mg-dependent methyl migration to produce 3-hydroxy-3-methyl-2-ketobutyrate (HMKB). In the reductase reaction, this 2-ketoacid undergoes a metal-dependent reduction by NADPH to yield (R)-2,3-dihydroxy-isovalerate. This chain is Ketol-acid reductoisomerase (NADP(+)) 1, found in Bacillus cereus (strain ATCC 14579 / DSM 31 / CCUG 7414 / JCM 2152 / NBRC 15305 / NCIMB 9373 / NCTC 2599 / NRRL B-3711).